A 500-amino-acid polypeptide reads, in one-letter code: NAD(P)H-quinone oxidoreductase chain 4, chloroplastic (500 aa).

14 helical membrane passes run 4–24, 37–57, 87–107, 113–130, 134–154, 167–187, 211–231, 242–262, 274–294, 313–333, 334–354, 386–406, 417–437, and 462–482; these read FPWL…IFFL, ISIC…HFQL, LGSI…AWPI, LFYF…GLFS, LLLF…LLSM, FILY…GMGL, ILLY…IPLH, HYST…YGLI, YLFS…AALT, MGFI…GAIL, QILS…TASD, LALP…GLIT, LITF…LSML, and LFIL…PDFV.

It belongs to the complex I subunit 4 family.

Its subcellular location is the plastid. The protein resides in the chloroplast thylakoid membrane. It carries out the reaction a plastoquinone + NADH + (n+1) H(+)(in) = a plastoquinol + NAD(+) + n H(+)(out). The enzyme catalyses a plastoquinone + NADPH + (n+1) H(+)(in) = a plastoquinol + NADP(+) + n H(+)(out). The polypeptide is NAD(P)H-quinone oxidoreductase chain 4, chloroplastic (ndhD) (Hordeum vulgare (Barley)).